The primary structure comprises 218 residues: Protein-L-isoaspartate O-methyltransferase (218 aa).

The active site involves Ser60.

Belongs to the methyltransferase superfamily. L-isoaspartyl/D-aspartyl protein methyltransferase family.

The protein resides in the cytoplasm. The catalysed reaction is [protein]-L-isoaspartate + S-adenosyl-L-methionine = [protein]-L-isoaspartate alpha-methyl ester + S-adenosyl-L-homocysteine. In terms of biological role, catalyzes the methyl esterification of L-isoaspartyl residues in peptides and proteins that result from spontaneous decomposition of normal L-aspartyl and L-asparaginyl residues. It plays a role in the repair and/or degradation of damaged proteins. The sequence is that of Protein-L-isoaspartate O-methyltransferase from Roseiflexus sp. (strain RS-1).